The primary structure comprises 139 residues: Ribonuclease P protein component (139 aa).

The tract at residues 120 to 139 (KPTTGVEYSPKNEKCESVLP) is disordered. The segment covering 129–139 (PKNEKCESVLP) has biased composition (basic and acidic residues).

It belongs to the RnpA family. In terms of assembly, consists of a catalytic RNA component (M1 or rnpB) and a protein subunit.

The enzyme catalyses Endonucleolytic cleavage of RNA, removing 5'-extranucleotides from tRNA precursor.. Its function is as follows. RNaseP catalyzes the removal of the 5'-leader sequence from pre-tRNA to produce the mature 5'-terminus. It can also cleave other RNA substrates such as 4.5S RNA. The protein component plays an auxiliary but essential role in vivo by binding to the 5'-leader sequence and broadening the substrate specificity of the ribozyme. The chain is Ribonuclease P protein component from Chlamydia caviae (strain ATCC VR-813 / DSM 19441 / 03DC25 / GPIC) (Chlamydophila caviae).